The sequence spans 142 residues: Alpha-lactalbumin (142 aa).

An N-terminal signal peptide occupies residues 1–19; it reads MMSFVSLLLVGILFHATQA. One can recognise a C-type lysozyme domain in the interval 20 to 142; sequence EQLTKCEVFQ…KLDQWLCEKL (123 aa). 4 disulfides stabilise this stretch: cysteine 25-cysteine 139, cysteine 47-cysteine 130, cysteine 80-cysteine 96, and cysteine 92-cysteine 110. Asparagine 64 and asparagine 93 each carry an N-linked (GlcNAc...) asparagine glycan. Ca(2+)-binding residues include lysine 98, aspartate 101, aspartate 103, aspartate 106, and aspartate 107.

The protein belongs to the glycosyl hydrolase 22 family. Lactose synthase (LS) is a heterodimer of a catalytic component, beta1,4-galactosyltransferase (beta4Gal-T1) and a regulatory component, alpha-lactalbumin (LA). Mammary gland specific. Secreted in milk.

The protein localises to the secreted. In terms of biological role, regulatory subunit of lactose synthase, changes the substrate specificity of galactosyltransferase in the mammary gland making glucose a good acceptor substrate for this enzyme. This enables LS to synthesize lactose, the major carbohydrate component of milk. In other tissues, galactosyltransferase transfers galactose onto the N-acetylglucosamine of the oligosaccharide chains in glycoproteins. The protein is Alpha-lactalbumin (LALBA) of Capra hircus (Goat).